We begin with the raw amino-acid sequence, 280 residues long: Eukaryotic translation initiation factor 3 subunit F-1 (280 aa).

The MPN domain maps to 8–138 (VRVHPVVLFQ…LRAYICIQLG (131 aa)).

Belongs to the eIF-3 subunit F family. As to quaternary structure, component of the eukaryotic translation initiation factor 3 (eIF-3) complex. The eIF-3 complex interacts with pix.

It is found in the cytoplasm. Its function is as follows. Component of the eukaryotic translation initiation factor 3 (eIF-3) complex, which is involved in protein synthesis of a specialized repertoire of mRNAs and, together with other initiation factors, stimulates binding of mRNA and methionyl-tRNAi to the 40S ribosome. The eIF-3 complex specifically targets and initiates translation of a subset of mRNAs involved in cell proliferation. This Drosophila mojavensis (Fruit fly) protein is Eukaryotic translation initiation factor 3 subunit F-1.